A 508-amino-acid chain; its full sequence is Polyamine oxidase FMS1 (508 aa).

It belongs to the flavin monoamine oxidase family. Requires FAD as cofactor.

The catalysed reaction is spermine + O2 + H2O = 3-aminopropanal + spermidine + H2O2. It carries out the reaction spermidine + O2 + H2O = 3-aminopropanal + putrescine + H2O2. It catalyses the reaction N(1)-acetylspermine + O2 + H2O = 3-acetamidopropanal + spermidine + H2O2. The enzyme catalyses N(1)-acetylspermidine + O2 + H2O = 3-acetamidopropanal + putrescine + H2O2. The catalysed reaction is N(8)-acetylspermidine + O2 + H2O = 4-acetamidobutanal + propane-1,3-diamine + H2O2. In terms of biological role, involved in the production of beta-alanine, a precursor of pantothenic acid. Multicopy suppressor of fenpropimorph resistance. This Saccharomyces cerevisiae (strain ATCC 204508 / S288c) (Baker's yeast) protein is Polyamine oxidase FMS1 (FMS1).